A 226-amino-acid chain; its full sequence is RNA pyrophosphohydrolase (226 aa).

A Nudix hydrolase domain is found at 6 to 149 (GFRPNVGIIL…KRGVYEMALT (144 aa)). The Nudix box motif lies at 38 to 59 (GGIDRGETPEQAMFRELHEEVG). The interval 197 to 226 (MELPPGASFDPDPRTGDGDPGMPGIHKPAG) is disordered.

It belongs to the Nudix hydrolase family. RppH subfamily. Requires a divalent metal cation as cofactor.

Its function is as follows. Accelerates the degradation of transcripts by removing pyrophosphate from the 5'-end of triphosphorylated RNA, leading to a more labile monophosphorylated state that can stimulate subsequent ribonuclease cleavage. In Paracidovorax citrulli (strain AAC00-1) (Acidovorax citrulli), this protein is RNA pyrophosphohydrolase.